A 375-amino-acid polypeptide reads, in one-letter code: Amylovoran biosynthesis protein AmsC (375 aa).

The next 9 helical transmembrane spans lie at 2–22, 31–51, 93–113, 162–182, 208–228, 256–276, 287–307, 309–329, and 337–357; these read AIYW…LAMI, KILI…FAGI, MVLA…LLFI, IAFI…FIVL, LPLV…KKLF, VFGL…LYYF, VYIL…FSDF, IFGG…FAFL, and LLNF…NTIL.

Its subcellular location is the cell membrane. The protein operates within glycan metabolism; exopolysaccharide biosynthesis. Its function is as follows. Involved in the biosynthesis of amylovoran which functions as a virulence factor. This Erwinia amylovora (Fire blight bacteria) protein is Amylovoran biosynthesis protein AmsC (amsC).